A 603-amino-acid chain; its full sequence is Arginine--tRNA ligase (603 aa).

A 'HIGH' region motif is present at residues 143–153; the sequence is PNIAKEMHVGH.

Belongs to the class-I aminoacyl-tRNA synthetase family. As to quaternary structure, monomer.

It is found in the cytoplasm. The enzyme catalyses tRNA(Arg) + L-arginine + ATP = L-arginyl-tRNA(Arg) + AMP + diphosphate. This is Arginine--tRNA ligase from Prochlorococcus marinus (strain MIT 9211).